A 399-amino-acid chain; its full sequence is Elongation factor Tu (399 aa).

A tr-type G domain is found at 10-209; the sequence is KPHVNIGTIG…DVDEYIPTPV (200 aa). Positions 19–26 are G1; that stretch reads GHVDHGKT. 19–26 is a binding site for GTP; that stretch reads GHVDHGKT. A Mg(2+)-binding site is contributed by T26. The segment at 62-66 is G2; the sequence is GITIN. Positions 83–86 are G3; it reads DCPG. Residues 83-87 and 138-141 each bind GTP; these read DCPGH and NKCD. Positions 138–141 are G4; sequence NKCD. The interval 175–177 is G5; sequence SAY.

The protein belongs to the TRAFAC class translation factor GTPase superfamily. Classic translation factor GTPase family. EF-Tu/EF-1A subfamily. Monomer.

It is found in the cytoplasm. The enzyme catalyses GTP + H2O = GDP + phosphate + H(+). In terms of biological role, GTP hydrolase that promotes the GTP-dependent binding of aminoacyl-tRNA to the A-site of ribosomes during protein biosynthesis. This Bifidobacterium animalis subsp. lactis (strain AD011) protein is Elongation factor Tu.